The primary structure comprises 208 residues: Large ribosomal subunit protein uL3 (208 aa).

Positions 116-148 are disordered; sequence GFQGVIKRHGQSRGPMAHGSRYHRRPGSMGPVA.

It belongs to the universal ribosomal protein uL3 family. As to quaternary structure, part of the 50S ribosomal subunit. Forms a cluster with proteins L14 and L19.

Its function is as follows. One of the primary rRNA binding proteins, it binds directly near the 3'-end of the 23S rRNA, where it nucleates assembly of the 50S subunit. This Streptococcus agalactiae serotype Ia (strain ATCC 27591 / A909 / CDC SS700) protein is Large ribosomal subunit protein uL3.